A 327-amino-acid chain; its full sequence is Tyrosine--tRNA ligase (327 aa).

Tyr33 lines the L-tyrosine pocket. A 'HIGH' region motif is present at residues 38–46 (PSGVLHLGH). Residues Tyr154, Gln158, Asp161, and Gln176 each coordinate L-tyrosine. The 'KMSKS' region motif lies at 212-216 (KMSSS). Residue Ser215 participates in ATP binding.

It belongs to the class-I aminoacyl-tRNA synthetase family. TyrS type 3 subfamily. As to quaternary structure, homodimer.

It is found in the cytoplasm. The catalysed reaction is tRNA(Tyr) + L-tyrosine + ATP = L-tyrosyl-tRNA(Tyr) + AMP + diphosphate + H(+). Functionally, catalyzes the attachment of tyrosine to tRNA(Tyr) in a two-step reaction: tyrosine is first activated by ATP to form Tyr-AMP and then transferred to the acceptor end of tRNA(Tyr). This Halobacterium salinarum (strain ATCC 29341 / DSM 671 / R1) protein is Tyrosine--tRNA ligase.